A 64-amino-acid chain; its full sequence is Large ribosomal subunit protein bL35 (64 aa).

Residues 19–41 are disordered; sequence SGKVKRERMNGSHNLEHKNRKRT. Positions 25 to 35 are enriched in basic and acidic residues; that stretch reads ERMNGSHNLEH.

It belongs to the bacterial ribosomal protein bL35 family.

This is Large ribosomal subunit protein bL35 from Chlorobaculum tepidum (strain ATCC 49652 / DSM 12025 / NBRC 103806 / TLS) (Chlorobium tepidum).